The chain runs to 477 residues: ATP synthase subunit beta (477 aa).

Residue 155-162 (GGAGVGKT) coordinates ATP.

The protein belongs to the ATPase alpha/beta chains family. F-type ATPases have 2 components, CF(1) - the catalytic core - and CF(0) - the membrane proton channel. CF(1) has five subunits: alpha(3), beta(3), gamma(1), delta(1), epsilon(1). CF(0) has three main subunits: a(1), b(2) and c(9-12). The alpha and beta chains form an alternating ring which encloses part of the gamma chain. CF(1) is attached to CF(0) by a central stalk formed by the gamma and epsilon chains, while a peripheral stalk is formed by the delta and b chains.

It localises to the cell inner membrane. It catalyses the reaction ATP + H2O + 4 H(+)(in) = ADP + phosphate + 5 H(+)(out). Produces ATP from ADP in the presence of a proton gradient across the membrane. The catalytic sites are hosted primarily by the beta subunits. In Mesorhizobium japonicum (strain LMG 29417 / CECT 9101 / MAFF 303099) (Mesorhizobium loti (strain MAFF 303099)), this protein is ATP synthase subunit beta.